The sequence spans 247 residues: MITELEMGKGESELELGLGLSLGGGTAAKIGKSGGGGAWGERGRLLTAKDFPSVGSKRAADSASHAGSSPPRSSSQVVGWPPIGSHRMNSLVNNQATKSAREEEEAGKKKVKDDEPKDVTKKVNGKVQVGFIKVNMDGVAIGRKVDLNAHSSYENLAQTLEDMFFRTNPGTVGLTSQFTKPLRLLDGSSEFVLTYEDKEGDWMLVGDVPWRMFINSVKRLRVMKTSEANGLAARNQEPNERQRKQPV.

An EAR-like (transcriptional repression) motif is present at residues 14–18 (LELGL). Gly residues predominate over residues 25-40 (GTAAKIGKSGGGGAWG). 2 disordered regions span residues 25 to 44 (GTAA…ERGR) and 49 to 119 (KDFP…PKDV). Residues 62–75 (SASHAGSSPPRSSS) are compositionally biased toward low complexity. A compositionally biased stretch (polar residues) spans 87-98 (RMNSLVNNQATK). Residues 106-119 (AGKKKVKDDEPKDV) are compositionally biased toward basic and acidic residues. The PB1 domain maps to 129–225 (VGFIKVNMDG…SVKRLRVMKT (97 aa)).

This sequence belongs to the Aux/IAA family. In terms of assembly, homodimers and heterodimers. Interacts with TPL. Preferentially expressed in stems.

It is found in the nucleus. Its function is as follows. Aux/IAA proteins are short-lived transcriptional factors that function as repressors of early auxin response genes at low auxin concentrations. Repression is thought to result from the interaction with auxin response factors (ARFs), proteins that bind to the auxin-responsive promoter element (AuxRE). Formation of heterodimers with ARF proteins may alter their ability to modulate early auxin response genes expression. This Arabidopsis thaliana (Mouse-ear cress) protein is Auxin-responsive protein IAA13 (IAA13).